Here is a 151-residue protein sequence, read N- to C-terminus: Protein SprT-like (151 aa).

Positions 7 to 147 (QKLTESISES…GKCKGKLHLH (141 aa)) constitute a SprT-like domain. Residue H67 participates in Zn(2+) binding. E68 is a catalytic residue. H71 lines the Zn(2+) pocket.

This sequence belongs to the SprT family. It depends on Zn(2+) as a cofactor.

Its subcellular location is the cytoplasm. The protein is Protein SprT-like of Staphylococcus carnosus (strain TM300).